Consider the following 245-residue polypeptide: MSDPASLFGLPPDPDAAPPVHLPGDWDEVLRGETSQPYFRELWAFVQREREAGPVYPAPEDLFSALRLTPYRDVKVLILGQDPYHGAGQAHGLSFSVRPGVRVPPSLQNIYKELRDDVGFKPPRHGSLVSWARQGVLLLNAVLTVREGEPNSHAGKGWESFTDAIIRAVNEKPTRVVFVLWGAYARKKAKLVTQPQHVIIESAHPSPLSVAKFLGTRPFSRINAALEAAGETPIDWQLPAEPEVA.

D82 serves as the catalytic Proton acceptor.

Belongs to the uracil-DNA glycosylase (UDG) superfamily. UNG family.

Its subcellular location is the cytoplasm. The enzyme catalyses Hydrolyzes single-stranded DNA or mismatched double-stranded DNA and polynucleotides, releasing free uracil.. In terms of biological role, excises uracil residues from the DNA which can arise as a result of misincorporation of dUMP residues by DNA polymerase or due to deamination of cytosine. The chain is Uracil-DNA glycosylase from Deinococcus geothermalis (strain DSM 11300 / CIP 105573 / AG-3a).